The sequence spans 353 residues: Photosystem II protein D1 (353 aa).

Thr-2 is subject to N-acetylthreonine. Thr-2 bears the Phosphothreonine mark. 3 helical membrane passes run 29-46 (YIGW…TATS), 118-133 (HFLL…EWEL), and 142-156 (WIVV…AATA). His-118 is a chlorophyll a binding site. Tyr-126 lines the pheophytin a pocket. [CaMn4O5] cluster-binding residues include Asp-170 and Glu-189. Residues 197–218 (FHMLGVAGVFGGSLFSAMHGSL) form a helical membrane-spanning segment. A chlorophyll a-binding site is contributed by His-198. A quinone-binding positions include His-215 and 264 to 265 (SF). His-215 contacts Fe cation. His-272 serves as a coordination point for Fe cation. A helical membrane pass occupies residues 274-288 (FLAAWPVVGIWFTAL). His-332, Glu-333, Asp-342, and Ala-344 together coordinate [CaMn4O5] cluster. Residues 345–353 (AVDAPSISG) constitute a propeptide that is removed on maturation.

The protein belongs to the reaction center PufL/M/PsbA/D family. In terms of assembly, PSII is composed of 1 copy each of membrane proteins PsbA, PsbB, PsbC, PsbD, PsbE, PsbF, PsbH, PsbI, PsbJ, PsbK, PsbL, PsbM, PsbT, PsbX, PsbY, PsbZ, Psb30/Ycf12, at least 3 peripheral proteins of the oxygen-evolving complex and a large number of cofactors. It forms dimeric complexes. The D1/D2 heterodimer binds P680, chlorophylls that are the primary electron donor of PSII, and subsequent electron acceptors. It shares a non-heme iron and each subunit binds pheophytin, quinone, additional chlorophylls, carotenoids and lipids. D1 provides most of the ligands for the Mn4-Ca-O5 cluster of the oxygen-evolving complex (OEC). There is also a Cl(-1) ion associated with D1 and D2, which is required for oxygen evolution. The PSII complex binds additional chlorophylls, carotenoids and specific lipids. serves as cofactor. Post-translationally, tyr-161 forms a radical intermediate that is referred to as redox-active TyrZ, YZ or Y-Z. In terms of processing, C-terminally processed by CTPA; processing is essential to allow assembly of the oxygen-evolving complex and thus photosynthetic growth.

It is found in the plastid. The protein localises to the chloroplast thylakoid membrane. The catalysed reaction is 2 a plastoquinone + 4 hnu + 2 H2O = 2 a plastoquinol + O2. Its function is as follows. Photosystem II (PSII) is a light-driven water:plastoquinone oxidoreductase that uses light energy to abstract electrons from H(2)O, generating O(2) and a proton gradient subsequently used for ATP formation. It consists of a core antenna complex that captures photons, and an electron transfer chain that converts photonic excitation into a charge separation. The D1/D2 (PsbA/PsbD) reaction center heterodimer binds P680, the primary electron donor of PSII as well as several subsequent electron acceptors. The protein is Photosystem II protein D1 of Vicia faba (Broad bean).